Consider the following 369-residue polypeptide: F-box protein UCC1 (369 aa).

Positions 8–45 (LMDLPLEIHLSLLEYVPNELRAVNKYFYVLHNHSYKEK) constitute an F-box domain.

In terms of assembly, component of the SCF(UCC1) E3 ubiquitin-protein ligase complex composed of CDC53, SKP1, RBX1 and UCC1. Interacts with CIT2. In terms of processing, monoubiquitinated by UBC4.

It functions in the pathway protein modification; protein ubiquitination. Functionally, substrate recognition component of the SKP1-CUL1-F-box protein E3 ubiquitin-protein ligase complex SCF(UCC1) which mediates the ubiquitination and subsequent proteasomal degradation of target proteins. The SCF(UCC1) complex acts as a metabolic switch for the glyoxylate cycle and regulates the level of CIT2 protein to maintain citrate homeostasis. In Saccharomyces cerevisiae (strain ATCC 204508 / S288c) (Baker's yeast), this protein is F-box protein UCC1 (UCC1).